Here is a 308-residue protein sequence, read N- to C-terminus: 2-methylisocitrate lyase (308 aa).

54-56 (SGG) contributes to the substrate binding site. 2 residues coordinate Mg(2+): aspartate 94 and aspartate 96. Substrate-binding positions include 131 to 132 (CG), arginine 166, glutamate 196, 224 to 226 (NIT), arginine 255, and arginine 284.

This sequence belongs to the isocitrate lyase/PEP mutase superfamily. Methylisocitrate lyase family. As to quaternary structure, homotetramer; dimer of dimers. Mg(2+) is required as a cofactor.

The enzyme catalyses (2S,3R)-3-hydroxybutane-1,2,3-tricarboxylate = pyruvate + succinate. It participates in organic acid metabolism; propanoate degradation. Its function is as follows. Involved in the catabolism of short chain fatty acids (SCFA) via the 2-methylcitrate cycle I (propionate degradation route). Catalyzes the thermodynamically favored C-C bond cleavage reaction of (2R,3S)-2-methylisocitrate to yield pyruvate and succinate via an alpha-carboxy-carbanion intermediate. This Vibrio cholerae serotype O1 (strain ATCC 39315 / El Tor Inaba N16961) protein is 2-methylisocitrate lyase.